Reading from the N-terminus, the 219-residue chain is Transcriptional regulatory protein QseB (219 aa).

One can recognise a Response regulatory domain in the interval 2 to 116 (RILLIEDDML…EVAARLEALM (115 aa)). D51 carries the 4-aspartylphosphate modification. Positions 124-218 (SNELRHGNVM…VHGIGYTLGE (95 aa)) form a DNA-binding region, ompR/PhoB-type.

Post-translationally, phosphorylated by QseC.

Its subcellular location is the cytoplasm. Functionally, member of a two-component regulatory system QseB/QseC. Activates the flagella regulon by activating transcription of FlhDC. Currently it is not known whether this effect is direct or not. This chain is Transcriptional regulatory protein QseB (qseB), found in Escherichia coli O157:H7.